Reading from the N-terminus, the 445-residue chain is Argininosuccinate synthase (445 aa).

Residues 17-25 (AFSGGLDTS) and alanine 43 each bind ATP. Tyrosine 99 contacts L-citrulline. ATP contacts are provided by glycine 129 and threonine 131. 3 residues coordinate L-aspartate: threonine 131, asparagine 135, and aspartate 136. Residue asparagine 135 coordinates L-citrulline. Aspartate 136 lines the ATP pocket. Positions 139 and 192 each coordinate L-citrulline. Aspartate 194 is an ATP binding site. L-citrulline contacts are provided by threonine 201, glutamate 203, and glutamate 280.

This sequence belongs to the argininosuccinate synthase family. Type 2 subfamily. As to quaternary structure, homotetramer.

Its subcellular location is the cytoplasm. The enzyme catalyses L-citrulline + L-aspartate + ATP = 2-(N(omega)-L-arginino)succinate + AMP + diphosphate + H(+). The protein operates within amino-acid biosynthesis; L-arginine biosynthesis; L-arginine from L-ornithine and carbamoyl phosphate: step 2/3. This is Argininosuccinate synthase from Bradyrhizobium sp. (strain BTAi1 / ATCC BAA-1182).